A 1657-amino-acid chain; its full sequence is Ras GTPase-activating-like protein IQGAP1 (1657 aa).

Serine 2 is subject to N-acetylserine. Position 2 is a phosphoserine (serine 2). Residues 44–159 form the Calponin-homology (CH) domain; sequence LCHLEEAKRW…YCIHALSLYL (116 aa). Tyrosine 172 is modified (phosphotyrosine). The residue at position 330 (serine 330) is a Phosphoserine. The WW domain occupies 679–712; sequence GDNNSKWVKHWVKGGYYYYHNLETQEGGWDEPPN. IQ domains lie at 745 to 774, 775 to 804, 805 to 834, and 835 to 864; these read NEGL…FLKK, QIPA…YLRS, HKDE…YFRD, and HIND…AEDP. Residues 956–1274 form a C1 region; that stretch reads GGLKALSKEK…FFQTACDVPE (319 aa). Residues 1020 to 1269 enclose the Ras-GAP domain; it reads YLLLRLFKTA…QKFRRFFQTA (250 aa). The segment at 1276–1657 is C2; sequence QDKFNVDEYS…FLLNKKFYGK (382 aa). The tract at residues 1410–1448 is disordered; sequence TPATSEQEAEHQRAMQRRAIRDAKTPDKMKKSKSVKEDS. Over residues 1417-1448 the composition is skewed to basic and acidic residues; it reads EAEHQRAMQRRAIRDAKTPDKMKKSKSVKEDS. Residue serine 1441 is modified to Phosphoserine; by PKC. At serine 1443 the chain carries Phosphoserine; by PKC/PRKCE.

Interacts with CDC42; the interaction is demonstrated with IQGAP1 in GTP-bound and in nucleotide-free state. Interacts with RAC1. Does not interact with RHOA. Interacts with TSG101. Interacts with PAK6. Interacts with TMEM14B; this interaction increases IQGAP1 phosphorylation and induces its nuclear translocation. Interacts with SASH1. Interacts with PJVK. Interacts with SLC26A4; this interaction enhances the chloride-bicarbonate exchange activity of SLC26A4. Interacts with SVEP1. Interacts with ILK; the interaction is required for localization of IQGAP to the cell cortex. In terms of assembly, (Microbial infection) Interacts with ebolavirus vp40. As to quaternary structure, (Microbial infection) Interacts with human cytomegalovirus protein UL5. (Microbial infection) Interacts with C.jejuni invasion antigen D (CiaD). Phosphorylation of Ser-1443 by PKC/PRKCE prevents interaction between C1 and C2, allowing binding of nucleotide-free CDC42. Ser-1443 phosphorylation enhances the ability to promote neurite outgrowth. In terms of tissue distribution, expressed in the placenta, lung, and kidney. A lower level expression is seen in the heart, liver, skeletal muscle and pancreas.

Its subcellular location is the cell membrane. The protein resides in the nucleus. The protein localises to the cytoplasm. It is found in the cell cortex. It localises to the apical cell membrane. Its subcellular location is the basolateral cell membrane. In terms of biological role, plays a crucial role in regulating the dynamics and assembly of the actin cytoskeleton. Recruited to the cell cortex by interaction with ILK which allows it to cooperate with its effector DIAPH1 to locally stabilize microtubules and allow stable insertion of caveolae into the plasma membrane. Binds to activated CDC42 but does not stimulate its GTPase activity. Associates with calmodulin. May promote neurite outgrowth. May play a possible role in cell cycle regulation by contributing to cell cycle progression after DNA replication arrest. This chain is Ras GTPase-activating-like protein IQGAP1 (IQGAP1), found in Homo sapiens (Human).